Reading from the N-terminus, the 358-residue chain is Phosphoserine aminotransferase (358 aa).

Arginine 41 contributes to the L-glutamate binding site. Residues 75 to 76, tryptophan 100, threonine 148, aspartate 167, and glutamine 190 each bind pyridoxal 5'-phosphate; that span reads AS. An N6-(pyridoxal phosphate)lysine modification is found at lysine 191. A pyridoxal 5'-phosphate-binding site is contributed by 233–234; sequence NT.

The protein belongs to the class-V pyridoxal-phosphate-dependent aminotransferase family. SerC subfamily. As to quaternary structure, homodimer. Requires pyridoxal 5'-phosphate as cofactor.

It localises to the cytoplasm. It catalyses the reaction O-phospho-L-serine + 2-oxoglutarate = 3-phosphooxypyruvate + L-glutamate. It carries out the reaction 4-(phosphooxy)-L-threonine + 2-oxoglutarate = (R)-3-hydroxy-2-oxo-4-phosphooxybutanoate + L-glutamate. Its pathway is amino-acid biosynthesis; L-serine biosynthesis; L-serine from 3-phospho-D-glycerate: step 2/3. The protein operates within cofactor biosynthesis; pyridoxine 5'-phosphate biosynthesis; pyridoxine 5'-phosphate from D-erythrose 4-phosphate: step 3/5. In terms of biological role, catalyzes the reversible conversion of 3-phosphohydroxypyruvate to phosphoserine and of 3-hydroxy-2-oxo-4-phosphonooxybutanoate to phosphohydroxythreonine. The sequence is that of Phosphoserine aminotransferase from Campylobacter jejuni subsp. jejuni serotype O:23/36 (strain 81-176).